The chain runs to 154 residues: 6,7-dimethyl-8-ribityllumazine synthase (154 aa).

5-amino-6-(D-ribitylamino)uracil-binding positions include F23, 57-59, and 81-83; these read AFE and AVI. 86-87 contributes to the (2S)-2-hydroxy-3-oxobutyl phosphate binding site; that stretch reads ST. H89 functions as the Proton donor in the catalytic mechanism. F114 contributes to the 5-amino-6-(D-ribitylamino)uracil binding site. R128 lines the (2S)-2-hydroxy-3-oxobutyl phosphate pocket.

It belongs to the DMRL synthase family.

It catalyses the reaction (2S)-2-hydroxy-3-oxobutyl phosphate + 5-amino-6-(D-ribitylamino)uracil = 6,7-dimethyl-8-(1-D-ribityl)lumazine + phosphate + 2 H2O + H(+). The protein operates within cofactor biosynthesis; riboflavin biosynthesis; riboflavin from 2-hydroxy-3-oxobutyl phosphate and 5-amino-6-(D-ribitylamino)uracil: step 1/2. Catalyzes the formation of 6,7-dimethyl-8-ribityllumazine by condensation of 5-amino-6-(D-ribitylamino)uracil with 3,4-dihydroxy-2-butanone 4-phosphate. This is the penultimate step in the biosynthesis of riboflavin. The protein is 6,7-dimethyl-8-ribityllumazine synthase of Campylobacter jejuni subsp. jejuni serotype O:2 (strain ATCC 700819 / NCTC 11168).